Consider the following 323-residue polypeptide: Down-regulator of invasive growth 2 (323 aa).

Residues 1-10 show a composition bias toward acidic residues; it reads MNKEEQEDPQ. The segment at 1-26 is disordered; that stretch reads MNKEEQEDPQQEQISTVQENDPRNLQ. Residues 11 to 26 are compositionally biased toward polar residues; it reads QEQISTVQENDPRNLQ. The residue at position 34 (Ser-34) is a Phosphoserine. Positions 67 to 87 are disordered; that stretch reads LSQKEEDHSGKPPTITTSPAE. Residues Ser-225, Ser-266, and Ser-270 each carry the phosphoserine modification.

Forms a complex with DIG1, STE12 and either FUS3 or KSS1. The interaction of FUS3 with STE12 depends on the presence of both DIG1 and DIG2. STE12 is lost from FUS3/DIG1/DIG2 complex after pheromone treatment. DIG1 and DIG2 have also been reported to interact with CLN1 and CLN2. In terms of processing, phosphorylated by FUS3 and KSS1, in a pheromone-stimulated manner.

It is found in the nucleus. Its function is as follows. DIG2 and DIG1 are negative regulators of the filamentation and pheromone induced mating program. DIG1 and DIG2 inhibit the transcriptional activity of STE12 by direct protein-protein interaction. DIG2 binds to the DNA binding domain (DBD) of STE12 and thus inhibits transcription when overexpressed. This chain is Down-regulator of invasive growth 2 (DIG2), found in Saccharomyces cerevisiae (strain ATCC 204508 / S288c) (Baker's yeast).